Here is a 66-residue protein sequence, read N- to C-terminus: Large ribosomal subunit protein bL35 (66 aa).

The segment covering 1-16 (MPKMKTHKGSAKRFKK) has biased composition (basic residues). The tract at residues 1–24 (MPKMKTHKGSAKRFKKTGTGQLKR) is disordered.

This sequence belongs to the bacterial ribosomal protein bL35 family.

This Anoxybacillus flavithermus (strain DSM 21510 / WK1) protein is Large ribosomal subunit protein bL35.